We begin with the raw amino-acid sequence, 245 residues long: 4-hydroxy-tetrahydrodipicolinate reductase (245 aa).

NAD(+) is bound by residues 7–12 (GARGKV), 75–77 (GTT), and 102–105 (APNF). His-132 functions as the Proton donor/acceptor in the catalytic mechanism. Residue His-133 coordinates (S)-2,3,4,5-tetrahydrodipicolinate. The active-site Proton donor is the Lys-136. A (S)-2,3,4,5-tetrahydrodipicolinate-binding site is contributed by 142–143 (GT).

Belongs to the DapB family.

It localises to the cytoplasm. It catalyses the reaction (S)-2,3,4,5-tetrahydrodipicolinate + NAD(+) + H2O = (2S,4S)-4-hydroxy-2,3,4,5-tetrahydrodipicolinate + NADH + H(+). The catalysed reaction is (S)-2,3,4,5-tetrahydrodipicolinate + NADP(+) + H2O = (2S,4S)-4-hydroxy-2,3,4,5-tetrahydrodipicolinate + NADPH + H(+). It participates in amino-acid biosynthesis; L-lysine biosynthesis via DAP pathway; (S)-tetrahydrodipicolinate from L-aspartate: step 4/4. Its function is as follows. Catalyzes the conversion of 4-hydroxy-tetrahydrodipicolinate (HTPA) to tetrahydrodipicolinate. The protein is 4-hydroxy-tetrahydrodipicolinate reductase of Mycolicibacterium smegmatis (strain ATCC 700084 / mc(2)155) (Mycobacterium smegmatis).